The primary structure comprises 366 residues: Protein sigma-NS (366 aa).

An important for ssRNA-binding and formation of complexes region spans residues 1–11 (MASSLRAAISK).

The protein belongs to the orthoreovirus sigma-NS protein family. In terms of assembly, homooligomer; in presence of RNA. Interacts with protein mu-NS; this interaction allows the localization of sigma-NS to the viral factories. Interacts with host G3BP1 (via C-terminus); this interaction induces the relocalization of G3BP1 and other SG proteins to the viral factories periphery.

Its subcellular location is the host cytoplasm. In terms of biological role, protein that binds to ssRNA and participates with protein mu-NS in forming the matrix of viral factories, which are large inclusions in the host cytoplasm where replication intermediates are assembled and viral RNA replication takes place. Plays a role in the inhibition of the integrated stress response (ISR) to escape from host cell translational shutoff. Participates in the disruption of stress granules (SG) through its association with host G3BP1 and mu-NS. The sequence is that of Protein sigma-NS (S3) from Mammalia (T3D).